We begin with the raw amino-acid sequence, 464 residues long: Cytochrome P450 85A1 (464 aa).

A helical transmembrane segment spans residues 2 to 22; that stretch reads AFFLIFLSSFFGLCIFCTALL. Cys-414 contacts heme.

Belongs to the cytochrome P450 family. Requires heme as cofactor. In terms of tissue distribution, expressed in sub-meristematic regions of shoot and root apexes, in zones undergoing lateral root formation, in fruits, and in all flower parts, with a high expression in young flower buds and at the joint in the pedicel.

It localises to the membrane. The catalysed reaction is 6-deoxocastasterone + reduced [NADPH--hemoprotein reductase] + O2 = 6alpha-hydroxycastasterone + oxidized [NADPH--hemoprotein reductase] + H2O + H(+). The enzyme catalyses 6alpha-hydroxycastasterone + reduced [NADPH--hemoprotein reductase] + O2 = castasterone + oxidized [NADPH--hemoprotein reductase] + 2 H2O + H(+). It catalyses the reaction 6-deoxocastasterone + 2 reduced [NADPH--hemoprotein reductase] + 2 O2 = castasterone + 2 oxidized [NADPH--hemoprotein reductase] + 3 H2O + 2 H(+). The protein operates within plant hormone biosynthesis; brassinosteroid biosynthesis. Functionally, catalyzes the C6-oxidation step in brassinosteroids biosynthesis. Converts 6-deoxocastasterone (6-deoxoCS) to castasterone (CS). May also convert 6-deoxoteasterone (6-deoxoTE) to teasterone (TE), 3-dehydro-6-deoxoteasterone (6-deoxo3DT, 6-deoxo3DHT) to 3-dehydroteasterone (3DT, 3-DHT), and 6-deoxotyphasterol (6-deoxoTY) to typhasterol (TY), but not castasterone (CS) to brassinolide (BL). This chain is Cytochrome P450 85A1, found in Solanum lycopersicum (Tomato).